A 413-amino-acid polypeptide reads, in one-letter code: Extracellular sucrase (413 aa).

Catalysis depends on D44, which acts as the Nucleophile. E276 acts as the Proton donor/acceptor in catalysis.

Belongs to the glycosyl hydrolase 68 family.

It is found in the secreted. The catalysed reaction is Hydrolysis of terminal non-reducing beta-D-fructofuranoside residues in beta-D-fructofuranosides.. The chain is Extracellular sucrase (sacC) from Zymomonas mobilis subsp. mobilis (strain ATCC 10988 / DSM 424 / LMG 404 / NCIMB 8938 / NRRL B-806 / ZM1).